We begin with the raw amino-acid sequence, 195 residues long: UPF0314 protein RL4541 (195 aa).

Transmembrane regions (helical) follow at residues 15–35 (FWFVACFAVLVIQIAVEYMMG), 64–84 (WYTPSHIIHGFLFYGLAHLIL), 127–147 (GDSILNSAMDTVFMCVGFFFA), and 150–170 (APVALTVAIATFFEIFTGYII).

It belongs to the UPF0314 family.

It is found in the cell membrane. The sequence is that of UPF0314 protein RL4541 from Rhizobium johnstonii (strain DSM 114642 / LMG 32736 / 3841) (Rhizobium leguminosarum bv. viciae).